Reading from the N-terminus, the 187-residue chain is Decorin-binding protein B (187 aa).

The signal sequence occupies residues 1-20; sequence MKIGKLNSIVIALFFKLLVA.

Belongs to the decorin-binding protein family.

Functionally, binds to decorin which may mediate the adherence of B.burgdorferi to collagen fibers in skin and other tissues. This is Decorin-binding protein B (dbpB) from Borreliella burgdorferi (strain ATCC 35210 / DSM 4680 / CIP 102532 / B31) (Borrelia burgdorferi).